Here is a 98-residue protein sequence, read N- to C-terminus: Small ribosomal subunit protein bS6 (98 aa).

Belongs to the bacterial ribosomal protein bS6 family.

Its function is as follows. Binds together with bS18 to 16S ribosomal RNA. The protein is Small ribosomal subunit protein bS6 of Staphylococcus haemolyticus (strain JCSC1435).